We begin with the raw amino-acid sequence, 413 residues long: uncharacterized protein (413 aa).

The 153-residue stretch at 3-155 (MEPRVLRREE…SRVRLSVPAG (153 aa)) folds into the N-acetyltransferase domain. Acetyl-CoA is bound by residues 86–88 (VSV), 94–99 (RRGVLT), and 122–123 (SE). Tyr127 acts as the Proton donor in catalysis. Phe413 serves as the catalytic Proton acceptor; via carboxylate.

It belongs to the acetyltransferase Eis family. Homohexamer; trimer of dimers.

This is an uncharacterized protein from Streptomyces coelicolor (strain ATCC BAA-471 / A3(2) / M145).